The sequence spans 306 residues: UDP-N-acetylenolpyruvoylglucosamine reductase (306 aa).

The FAD-binding PCMH-type domain occupies 34 to 199 (RVGGPAQLLF…TSVRLRGAIA (166 aa)). Arg-179 is an active-site residue. Ser-228 (proton donor) is an active-site residue. Glu-298 is an active-site residue.

The protein belongs to the MurB family. FAD serves as cofactor.

It localises to the cytoplasm. The enzyme catalyses UDP-N-acetyl-alpha-D-muramate + NADP(+) = UDP-N-acetyl-3-O-(1-carboxyvinyl)-alpha-D-glucosamine + NADPH + H(+). It participates in cell wall biogenesis; peptidoglycan biosynthesis. Cell wall formation. This is UDP-N-acetylenolpyruvoylglucosamine reductase from Rhodopseudomonas palustris (strain BisA53).